Here is a 1792-residue protein sequence, read N- to C-terminus: Eukaryotic translation initiation factor 4G (1792 aa).

Residues 1–12 (MSQRGDRGEGHA) are compositionally biased toward basic and acidic residues. 11 disordered regions span residues 1–285 (MSQR…PRPP), 424–446 (DSSG…TYGS), 491–590 (SPSM…PTPV), 612–659 (NSVP…EDLK), 678–761 (GVNK…NESH), 874–912 (VASE…EITR), 960–993 (SSSI…LDDW), 999–1018 (MSTP…EANG), 1275–1299 (GERE…EERE), 1407–1503 (WQQR…HRTT), and 1537–1600 (ELSS…KLYS). Gly residues predominate over residues 21 to 42 (FGGGHRGGGGVGGAGKGGGGSS). The segment covering 88–107 (PLRPPAPQNAPAHVPVPAPR) has biased composition (pro residues). 2 stretches are compositionally biased toward polar residues: residues 147-156 (RISSTSTSQG) and 179-191 (STMQ…SSAP). Composition is skewed to low complexity over residues 216–243 (PQAP…PLQQ), 263–278 (PSQV…SVPN), and 432–442 (PSVQQQSQPVS). Positions 491 to 517 (SPSMNTGPGSNKDNLAGSTTSGHSQVT) are enriched in polar residues. Composition is skewed to basic and acidic residues over residues 545–564 (DVNK…KDNE), 571–587 (KSGE…EKHP), and 633–643 (DSNKNATKDTR). The span at 644–654 (NLSQEPQSASS) shows a compositional bias: polar residues. Low complexity predominate over residues 699-718 (AADASSIDRSSARSTSESTE). Over residues 964–990 (ADHELPDESSEKEVNMGEDEGKKKVEL) the composition is skewed to basic and acidic residues. The EIF4E-binding stretch occupies residues 1018–1030 (GRKRYSRDFLLTL). The 224-residue stretch at 1183-1406 (QRQLKAILNK…RDSIDLRKNK (224 aa)) folds into the MIF4G domain. A compositionally biased stretch (acidic residues) spans 1278–1289 (EEAEADKTEEEG). Composition is skewed to basic and acidic residues over residues 1290–1299 (EIKQTKEERE) and 1411–1432 (RKVE…ERHA). Composition is skewed to low complexity over residues 1439 to 1450 (RGSVVGSGPRRG) and 1461 to 1470 (SAAALASPSS). 2 stretches are compositionally biased toward basic and acidic residues: residues 1490–1503 (IRFE…HRTT) and 1559–1572 (AREE…DRSG). The segment covering 1576-1593 (PNTQFAGPSNRPASQEGR) has biased composition (polar residues). Positions 1603 to 1727 (DLREKSISAI…SLQEVGTLIE (125 aa)) constitute an MI domain.

Belongs to the eukaryotic initiation factor 4G family. As to quaternary structure, EIF4F is a multi-subunit complex, the composition of which varies with external and internal environmental conditions. It is composed of at least EIF4A, EIF4E and EIF4G. In higher plants two isoforms of EIF4F have been identified, named isoform EIF4F and isoform EIF(iso)4F. Isoform EIF4F has subunits p220 and p26, whereas isoform EIF(iso)4F has subunits p82 and p28.

Component of the protein complex eIF4F, which is involved in the recognition of the mRNA cap, ATP-dependent unwinding of 5'-terminal secondary structure and recruitment of mRNA to the ribosome. The chain is Eukaryotic translation initiation factor 4G from Oryza sativa subsp. japonica (Rice).